The following is a 743-amino-acid chain: Threonine synthase-like 1 (743 aa).

At lysine 281 the chain carries N6-acetyllysine. At lysine 351 the chain carries N6-(pyridoxal phosphate)lysine.

This sequence belongs to the threonine synthase family. It depends on pyridoxal 5'-phosphate as a cofactor.

This chain is Threonine synthase-like 1 (THNSL1), found in Macaca fascicularis (Crab-eating macaque).